A 383-amino-acid chain; its full sequence is 8-amino-7-oxononanoate synthase (383 aa).

Arg-20 serves as a coordination point for substrate. 107-108 (GY) provides a ligand contact to pyridoxal 5'-phosphate. His-132 contributes to the substrate binding site. The pyridoxal 5'-phosphate site is built by Ser-178, His-206, and Thr-233. Position 236 is an N6-(pyridoxal phosphate)lysine (Lys-236). Thr-349 lines the substrate pocket.

This sequence belongs to the class-II pyridoxal-phosphate-dependent aminotransferase family. BioF subfamily. In terms of assembly, homodimer. Pyridoxal 5'-phosphate serves as cofactor.

The catalysed reaction is 6-carboxyhexanoyl-[ACP] + L-alanine + H(+) = (8S)-8-amino-7-oxononanoate + holo-[ACP] + CO2. The protein operates within cofactor biosynthesis; biotin biosynthesis. In terms of biological role, catalyzes the decarboxylative condensation of pimeloyl-[acyl-carrier protein] and L-alanine to produce 8-amino-7-oxononanoate (AON), [acyl-carrier protein], and carbon dioxide. This chain is 8-amino-7-oxononanoate synthase, found in Chromobacterium violaceum (strain ATCC 12472 / DSM 30191 / JCM 1249 / CCUG 213 / NBRC 12614 / NCIMB 9131 / NCTC 9757 / MK).